Consider the following 140-residue polypeptide: Protein NrdI (140 aa).

Belongs to the NrdI family.

In terms of biological role, probably involved in ribonucleotide reductase function. The chain is Protein NrdI from Photorhabdus laumondii subsp. laumondii (strain DSM 15139 / CIP 105565 / TT01) (Photorhabdus luminescens subsp. laumondii).